A 407-amino-acid polypeptide reads, in one-letter code: Probable tRNA sulfurtransferase (407 aa).

Residues 61–165 (NEITYRLSKI…LDAIYMYEEV (105 aa)) enclose the THUMP domain. ATP-binding positions include 183-184 (ML), 208-209 (HF), Arg265, Gly287, and Gln296.

It belongs to the ThiI family.

The protein resides in the cytoplasm. It carries out the reaction [ThiI sulfur-carrier protein]-S-sulfanyl-L-cysteine + a uridine in tRNA + 2 reduced [2Fe-2S]-[ferredoxin] + ATP + H(+) = [ThiI sulfur-carrier protein]-L-cysteine + a 4-thiouridine in tRNA + 2 oxidized [2Fe-2S]-[ferredoxin] + AMP + diphosphate. It catalyses the reaction [ThiS sulfur-carrier protein]-C-terminal Gly-Gly-AMP + S-sulfanyl-L-cysteinyl-[cysteine desulfurase] + AH2 = [ThiS sulfur-carrier protein]-C-terminal-Gly-aminoethanethioate + L-cysteinyl-[cysteine desulfurase] + A + AMP + 2 H(+). It functions in the pathway cofactor biosynthesis; thiamine diphosphate biosynthesis. Functionally, catalyzes the ATP-dependent transfer of a sulfur to tRNA to produce 4-thiouridine in position 8 of tRNAs, which functions as a near-UV photosensor. Also catalyzes the transfer of sulfur to the sulfur carrier protein ThiS, forming ThiS-thiocarboxylate. This is a step in the synthesis of thiazole, in the thiamine biosynthesis pathway. The sulfur is donated as persulfide by IscS. In Staphylococcus aureus (strain MSSA476), this protein is Probable tRNA sulfurtransferase.